The chain runs to 757 residues: MATAPLAFHLPFPFPSASRPPPRLLPPSRRPPAARLAATRRFRPPTADDEPPEAAEDSSHGLNRYDQLTRHVERARRRQQAEQPEITPDHPLFSSPPSSGEAGSYDPDDEFFDEIDRAIAEKREEFTRRGLIKPSAPAPSQPEEEDGLADELSPEEVIDLDEIRRLQGLSVVSLADEEDEEANGGGGGVDYGDDGVPLDDDGEVFDVADEVGLEGARVRYPAFRMTLAELLDESKLVPVAVTGDQDVALAGVQRDASLVAAGDLYVCVGEEGLAGLTEADKRGAVAVVADQTVDIEGTLACRALVIVDDITAALRMLPACLYRRPSKDMAVIGVAGTDGVTTTAHLVRAMYEAMGVRTGMVGVLGAYAFGNNKLDAQPDASGDPIAVQRLMATMLYNGAEAALLEATTDGMPSSGVDSEIDYDIAVLTNVRHAGDEAGMTYEEYMNSMASLFSRMVDPERHRKVVNIDDPSAPFFAAQGGQDVPVVTYSFENKKADVHTLKYQLSLFETEVLVQTPHGILEISSGLLGRDNIYNILASVAVGVAVGAPLEDIVKGIEEVDAIPGRCELIDEEQAFGVIVDHARTPESLSRLLDGVKELGPRRIVTVIGCCGERERGKRPVMTKVAAEKSDVVMLTSDNPANEDPLDILDDMLAGVGWTMEEYLKHGTNDYYPPLPNGHRIFLHDIRRVAVRAAVAMGEQGDVVVITGKGNDTYQIEVDKKEFFDDREECREALQYVDQLHRAGIDTSEFPWRLPESH.

A compositionally biased stretch (low complexity) spans 1 to 11; sequence MATAPLAFHLP. Residues 1–53 constitute a chloroplast transit peptide; that stretch reads MATAPLAFHLPFPFPSASRPPPRLLPPSRRPPAARLAATRRFRPPTADDEPPE. Disordered regions lie at residues 1–112, 126–152, and 172–195; these read MATA…DEFF, FTRR…ADEL, and VSLA…GDDG. Over residues 12 to 30 the composition is skewed to pro residues; sequence FPFPSASRPPPRLLPPSRR. Acidic residues-rich tracts occupy residues 47 to 56 and 142 to 152; these read ADDEPPEAAE and PEEEDGLADEL.

This sequence belongs to the MurCDEF family. MurE subfamily. Component of the plastid-encoded plastid RNA polymerase (PEP) complex.

Its subcellular location is the plastid. The protein localises to the chloroplast. Its function is as follows. Required for the activity of the plastid-encoded RNA polymerase (PEP) and full expression of genes transcribed by PEP. This Oryza sativa subsp. japonica (Rice) protein is UDP-N-acetylmuramoyl-L-alanyl-D-glutamate--2,6-diaminopimelate ligase MurE homolog, chloroplastic.